Consider the following 74-residue polypeptide: Guanine nucleotide-binding protein G(T) subunit gamma-T1 (74 aa).

C71 is subject to Cysteine methyl ester. C71 carries the S-farnesyl cysteine lipid modification. A propeptide spans 72 to 74 (VIS) (removed in mature form).

The protein belongs to the G protein gamma family. G proteins are composed of 3 units, alpha, beta and gamma. Retinal rod outer segment.

The protein resides in the cell membrane. Guanine nucleotide-binding proteins (G proteins) are involved as a modulator or transducer in various transmembrane signaling systems. The beta and gamma chains are required for the GTPase activity, for replacement of GDP by GTP, and for G protein-effector interaction. The chain is Guanine nucleotide-binding protein G(T) subunit gamma-T1 (GNGT1) from Bos taurus (Bovine).